The chain runs to 506 residues: Maturase K (506 aa).

The protein belongs to the intron maturase 2 family. MatK subfamily.

It is found in the plastid. Its subcellular location is the chloroplast. In terms of biological role, usually encoded in the trnK tRNA gene intron. Probably assists in splicing its own and other chloroplast group II introns. The chain is Maturase K from Angiopteris evecta (Mule's foot fern).